Consider the following 431-residue polypeptide: Histidine--tRNA ligase (431 aa).

Belongs to the class-II aminoacyl-tRNA synthetase family. In terms of assembly, homodimer.

The protein resides in the cytoplasm. It catalyses the reaction tRNA(His) + L-histidine + ATP = L-histidyl-tRNA(His) + AMP + diphosphate + H(+). The polypeptide is Histidine--tRNA ligase (Neisseria meningitidis serogroup C / serotype 2a (strain ATCC 700532 / DSM 15464 / FAM18)).